We begin with the raw amino-acid sequence, 225 residues long: O-methyltransferase rstn1 (225 aa).

S-adenosyl-L-methionine is bound by residues Q97 and H142.

This sequence belongs to the methyltransferase superfamily.

The catalysed reaction is desmethylrestrictinol + S-adenosyl-L-methionine = restrictinol + S-adenosyl-L-homocysteine + H(+). The protein operates within antifungal biosynthesis. O-methyltransferase; part of the gene cluster that mediates the biosynthesis of the tetrahydropyranyl antifungal agent restricticin that acts as an inhibitor of CYP51 and blocks the ergosterol biosynthesis. Within the pathway, rstn1 uses S-adenosylmethionine to methylate position C4 of desmethylrestrictinol to produce restrictinol. The highly reducing polyketide synthase rstn3, the short chain dehydrogenase rstn4, the cyclase rstn5, the FAD-dependent monooxygenase rstn6 and the enoylreductase rstn7 are required to generate the first stable intermediate desmethylrestrictinol. Rstn3 with rstn7 biosynthesize the first polyketide chain intermediate that is reduced by rstn4, followed by epoxidation by rstn6 before 6-endo cyclization via epoxide opening by rstn5 leads to desmethylrestrictinol. The methyltransferase rstn1 then catalyzes the C4 O-methylation of desmethylrestrictinol to produce restrictinol, and the nonribosomal peptide synthetase rstn8 catalyzes the C3 esterification of restrictinol with glycine that leads to restricticin. This chain is O-methyltransferase rstn1, found in Aspergillus nomiae NRRL (strain ATCC 15546 / NRRL 13137 / CBS 260.88 / M93).